Reading from the N-terminus, the 294-residue chain is Probable enoyl-CoA hydratase 2 (294 aa).

Residues 84-85 (HG), Lys-113, 190-195 (DLNPLH), Gly-213, and Phe-243 each bind (3R)-3-hydroxydecanoyl-CoA. The MaoC-like domain maps to 165–269 (DRAPDAISKQ…INPTTILFQS (105 aa)). A Microbody targeting signal motif is present at residues 292-294 (GSL).

Belongs to the short-chain dehydrogenases/reductases (SDR) family.

The protein localises to the peroxisome. The catalysed reaction is a (3R)-3-hydroxyacyl-CoA = a (2E)-enoyl-CoA + H2O. The sequence is that of Probable enoyl-CoA hydratase 2 (mfeB) from Dictyostelium discoideum (Social amoeba).